The primary structure comprises 365 residues: tRNA N6-adenosine threonylcarbamoyltransferase (365 aa).

Fe cation is bound by residues histidine 119 and histidine 123. Residues 141–145, aspartate 174, glycine 187, and asparagine 289 contribute to the substrate site; that span reads LVSGG. Aspartate 317 provides a ligand contact to Fe cation. The segment at 342-365 is disordered; the sequence is ARPRWPLDSKSPAMLGSGKKGAKA.

The protein belongs to the KAE1 / TsaD family. Fe(2+) is required as a cofactor.

Its subcellular location is the cytoplasm. It carries out the reaction L-threonylcarbamoyladenylate + adenosine(37) in tRNA = N(6)-L-threonylcarbamoyladenosine(37) in tRNA + AMP + H(+). Functionally, required for the formation of a threonylcarbamoyl group on adenosine at position 37 (t(6)A37) in tRNAs that read codons beginning with adenine. Is involved in the transfer of the threonylcarbamoyl moiety of threonylcarbamoyl-AMP (TC-AMP) to the N6 group of A37, together with TsaE and TsaB. TsaD likely plays a direct catalytic role in this reaction. The sequence is that of tRNA N6-adenosine threonylcarbamoyltransferase from Roseobacter denitrificans (strain ATCC 33942 / OCh 114) (Erythrobacter sp. (strain OCh 114)).